The following is a 302-amino-acid chain: uncharacterized protein (302 aa).

10 helical membrane passes run 13 to 32 (GILL…IYFK), 42 to 64 (ILSH…GRRW), 77 to 96 (FWLL…IFIW), 106 to 125 (ASLG…MLFL), 132 to 150 (LQWF…QLVV), 154 to 171 (VPIV…YGLL), 183 to 202 (LFLE…IWLA), 217 to 239 (NLLL…GAAA), 246 to 265 (LGFF…VLVY), and 275 to 297 (ITFA…AGHA). An EamA domain is found at 22 to 149 (TMWGIAPIYF…AAIGVGIQLV (128 aa)).

Belongs to the EamA transporter family.

Its subcellular location is the cell membrane. This is an uncharacterized protein from Vibrio cholerae serotype O1 (strain ATCC 39315 / El Tor Inaba N16961).